Consider the following 173-residue polypeptide: Small ribosomal subunit protein uS9 (173 aa).

Residues 1-15 (MTDTPTENLENTEVT) show a composition bias toward polar residues. Disordered stretches follow at residues 1–26 (MTDT…EIAY) and 135–173 (EASR…YSKR). Residues 154–173 (KERKKAGLKKARKAPQYSKR) show a composition bias toward basic residues.

The protein belongs to the universal ribosomal protein uS9 family.

The sequence is that of Small ribosomal subunit protein uS9 from Cutibacterium acnes (strain DSM 16379 / KPA171202) (Propionibacterium acnes).